The primary structure comprises 167 residues: Swarming motility protein SwrB (167 aa).

The disordered stretch occupies residues 63–105 (IENKASSASQSDEESQKSGLQTSETYQERDPVQEAENLPEHIE). Residues 88–105 (YQERDPVQEAENLPEHIE) are compositionally biased toward basic and acidic residues.

Functionally, required for swarming motility and for maximal sigma-D activity. The sequence is that of Swarming motility protein SwrB (swrB) from Bacillus subtilis (strain 168).